We begin with the raw amino-acid sequence, 272 residues long: Low-density lipoprotein receptor class A domain-containing protein 2 (272 aa).

A signal peptide spans 1–25 (MEACCLLQLPQRLLLLGAAALTATA). Residues 26 to 233 (LETADLAELC…GSTDAHTSRS (208 aa)) are Extracellular-facing. An N-linked (GlcNAc...) asparagine glycan is attached at Asn-97. The region spanning 172-214 (PCGAYFRCQNGRCIPSSLVCDPWGMDNCGDGSDQGSWSPADCR) is the LDL-receptor class A domain. Cystine bridges form between Cys-173–Cys-184, Cys-179–Cys-199, and Cys-191–Cys-213. Residues 202–272 (GSDQGSWSPA…QDAALEGSTE (71 aa)) are disordered. Positions 220 to 236 (PSQTGSTDAHTSRSLTP) are enriched in polar residues. A helical transmembrane segment spans residues 234–250 (LTPSPALGSAGSLWIAA). The Cytoplasmic portion of the chain corresponds to 251–272 (ERSSPAGRDPTRQDAALEGSTE).

It belongs to the LDLR family.

It localises to the membrane. This is Low-density lipoprotein receptor class A domain-containing protein 2 (LDLRAD2) from Homo sapiens (Human).